A 181-amino-acid polypeptide reads, in one-letter code: Large ribosomal subunit protein uL6 (181 aa).

It belongs to the universal ribosomal protein uL6 family. In terms of assembly, part of the 50S ribosomal subunit.

In terms of biological role, this protein binds to the 23S rRNA, and is important in its secondary structure. It is located near the subunit interface in the base of the L7/L12 stalk, and near the tRNA binding site of the peptidyltransferase center. The protein is Large ribosomal subunit protein uL6 of Hydrogenobaculum sp. (strain Y04AAS1).